A 256-amino-acid chain; its full sequence is NH(3)-dependent NAD(+) synthetase (256 aa).

29–36 contacts ATP; the sequence is GISGGIDS. Position 35 (aspartate 35) interacts with Mg(2+). Arginine 115 serves as a coordination point for deamido-NAD(+). Threonine 135 provides a ligand contact to ATP. Glutamate 140 contributes to the Mg(2+) binding site. Deamido-NAD(+) is bound by residues lysine 148 and aspartate 155. Positions 164 and 186 each coordinate ATP. Residue 245–246 coordinates deamido-NAD(+); that stretch reads HK.

The protein belongs to the NAD synthetase family. As to quaternary structure, homodimer.

The catalysed reaction is deamido-NAD(+) + NH4(+) + ATP = AMP + diphosphate + NAD(+) + H(+). It functions in the pathway cofactor biosynthesis; NAD(+) biosynthesis; NAD(+) from deamido-NAD(+) (ammonia route): step 1/1. In terms of biological role, catalyzes the ATP-dependent amidation of deamido-NAD to form NAD. Uses ammonia as a nitrogen source. This is NH(3)-dependent NAD(+) synthetase from Methanosarcina mazei (strain ATCC BAA-159 / DSM 3647 / Goe1 / Go1 / JCM 11833 / OCM 88) (Methanosarcina frisia).